The sequence spans 379 residues: MKLWKRAAAAIKDRKSLLAVGFSRRNSSYRNADLEAAIIKATSHDDSSVDYSNAHRVYKWIRSSPLNLKTLVYAISSRVNHTRSWIVALKSLMLLHGVLCCKVPSVVGEFRRLPFDLSDFSDGHSCLSKTWGFNVFVRTYFAFLHHYSSFLSDQIHRLRGNNRRSLEKTSDSVIQELERIQKLQSLLDMILQIRPVADNMKKTLILEAMDCLVIESINIYGRICGAVMKVLPLAGKSEAATVLKIVNKTTSQGEDLIVYFEFCKGFGVSNAREIPQFVRIPEEEVEAIEKMIDTVQEKPKLEKDEEKEDEKAMVVLEQPKKLQTIITDKWEIFEDDYRCFDRKDKWEIFEDEYHQNHLPLITMNQPVYITYTMPDLITF.

The region spanning 26-158 (NSSYRNADLE…SFLSDQIHRL (133 aa)) is the ENTH domain.

The protein localises to the membrane. Its subcellular location is the clathrin-coated pit. It localises to the golgi apparatus. The protein resides in the cytoplasmic vesicle. It is found in the clathrin-coated vesicle. The sequence is that of Putative clathrin assembly protein At1g68110 from Arabidopsis thaliana (Mouse-ear cress).